The primary structure comprises 777 residues: MEYTYQYSWIIPFIPLPVPILIGMGLLLFPTATKNHRRVWSFPSILLLSMVMLLSVYLSIQQINRSFIYQYVWSWTINNDFSLEFGHLIDPLASIMLILITTVGILVLFYSDNYMSHDQGYLRFFAYLSFFNTSMLGLVTSSNLIQIYIFWELVGMCSYLLIGFWFTRPIAATACQKAFVTNRVGDFGLLLGILGLYWITGSFEFRDLFEIVNNLIDNNNQVHFLFVTLCSFLLFAGAVAKSAQFPLHVWLPDAMEGPTPISALIHAATMVAAGIFLVARLLPLFVITPYIMNLISLIGIITVLLGATLALAQKDIKRSLAYSTMSQLGYMMLALGMGSYRAALFHLITHAYSKALLFLGSGSIIHSMESIVGYSPDKSQNMVLMGGLKKHVPITKTAFLVGTLSLCGIPPLACFWSKDEILNDSWLYSPIFAIIACSTAGFTAFYMFRVYLLTFDGHLNVHFQNYSGQKSSSVYSISLWGKQVPKRIQNPFCLLNLLTMNNNESTSFFWNNKCKLDGNVKKRIRPFITVTHFPNRKTFSYPHESDNTMLFSLFVLVLFTLFVAAIGIPFNQEGSDCDILSKLLNPSINLLHQNSNNFTDWYEFVTNASFSVSIALLGIFIATFLYKPIYSSLQNFNLLNSFYKRSANRVMWDKIQNWIYDWSYNRGYIDSFYTISLTGGIRGLAELSHFFDRRVIDGILNGFGLTSFFLGESLKYFGGGRISSYLLLYSIFIFIFLLMDSFFTNLPFFVLCQFLDSSFSMSISGFLLYENFLYENF.

The next 16 helical transmembrane spans lie at 9–29 (WIIPFIPLPVPILIGMGLLLF), 40–60 (WSFPSILLLSMVMLLSVYLSI), 89–109 (IDPLASIMLILITTVGILVLF), 125–145 (FAYLSFFNTSMLGLVTSSNLI), 147–167 (IYIFWELVGMCSYLLIGFWFT), 185–205 (GDFGLLLGILGLYWITGSFEF), 220–240 (NQVHFLFVTLCSFLLFAGAVA), 259–279 (TPISALIHAATMVAAGIFLVA), 290–312 (YIMNLISLIGIITVLLGATLALA), 328–348 (LGYMMLALGMGSYRAALFHLI), 355–375 (ALLFLGSGSIIHSMESIVGYS), 397–417 (TAFLVGTLSLCGIPPLACFWS), 426–446 (WLYSPIFAIIACSTAGFTAFY), 550–570 (LFSLFVLVLFTLFVAAIGIPF), 604–624 (FVTNASFSVSIALLGIFIATF), and 731–751 (IFIFIFLLMDSFFTNLPFFVL).

Belongs to the complex I subunit 5 family. In terms of assembly, NDH is composed of at least 16 different subunits, 5 of which are encoded in the nucleus.

The protein localises to the plastid. Its subcellular location is the chloroplast thylakoid membrane. The enzyme catalyses a plastoquinone + NADH + (n+1) H(+)(in) = a plastoquinol + NAD(+) + n H(+)(out). The catalysed reaction is a plastoquinone + NADPH + (n+1) H(+)(in) = a plastoquinol + NADP(+) + n H(+)(out). Its function is as follows. NDH shuttles electrons from NAD(P)H:plastoquinone, via FMN and iron-sulfur (Fe-S) centers, to quinones in the photosynthetic chain and possibly in a chloroplast respiratory chain. The immediate electron acceptor for the enzyme in this species is believed to be plastoquinone. Couples the redox reaction to proton translocation, and thus conserves the redox energy in a proton gradient. The chain is NAD(P)H-quinone oxidoreductase subunit 5, chloroplastic (ndhF) from Oenothera elata subsp. hookeri (Hooker's evening primrose).